The chain runs to 1003 residues: Methyl-CpG-binding domain protein 6 (1003 aa).

The MBD domain occupies 11–81 (DRAGGPVATS…KVFNFDPLAP (71 aa)). A required for interaction with ASXL1/2/3 region spans residues 57-68 (DGTCKCGLECPL). Disordered stretches follow at residues 120–219 (TCSH…PPPA), 238–664 (VPSD…PLLF), and 683–1003 (ATLD…KLAP). Pro residues-rich tracts occupy residues 140–155 (PGPP…PPTT) and 268–287 (TPPP…PASQ). Composition is skewed to low complexity over residues 297–308 (LPLVLGPLGGAP), 319–328 (LASSLLSAAA), and 348–361 (AQAP…SLRP). Pro residues predominate over residues 391–407 (APAPVPQPFSLPEPSQP). Over residues 408–426 (ILPSVLSLLGLPTPGPSHS) the composition is skewed to low complexity. The segment covering 439–456 (LPPPPTLSSGSPPQPRHP) has biased composition (pro residues). Low complexity-rich tracts occupy residues 460-498 (SLPG…PSEG) and 531-548 (GAGF…LSLG). The span at 570–589 (QPPPEPLLPPPGGPGPPLAP) shows a compositional bias: pro residues. Residues 590–602 (GEPEGPSLLVASL) show a composition bias toward low complexity. The segment covering 603–617 (LPPPPSDLLPPPSAP) has biased composition (pro residues). Over residues 618–633 (PSNLLASFLPLLALGP) the composition is skewed to low complexity. Over residues 635 to 649 (AGDGEGSAEGAGGPS) the composition is skewed to gly residues. Positions 650–662 (GEPFSGLGDLSPL) are enriched in low complexity. Residues 707 to 718 (TSSVTTATTDPG) are compositionally biased toward polar residues. 3 stretches are compositionally biased toward low complexity: residues 732–761 (PPQL…LPSL), 768–778 (LLSGQLGLQLL), and 788–798 (SEASSPLACLL). Pro residues predominate over residues 805 to 817 (PEQPEAPCLPPES). Residues 818–837 (PASALEPEPARPPLSALAPP) are compositionally biased toward low complexity. Residues 947-958 (RKSRRGRRRKYN) show a composition bias toward basic residues. Residues 959–969 (PTRNSNSSRQD) are compositionally biased toward polar residues. Basic residues predominate over residues 989–1003 (RPGRPAKNKRRKLAP).

As to quaternary structure, core component of the polycomb repressive deubiquitinase (PR-DUB) complex, at least composed of BAP1, one of ASXL1, ASXL2 or (probably) ASXL3, and one of MBD5 or MBD6. Distinct combinations of ASXL and MBD proteins may preferentially bind specific histone modification marks. The PR-DUB core associates with a number of accessory proteins, including FOXK1, FOXK2, KDM1B, HCFC1 and OGT; KDM1B specifically associates with ASXL2 PR-DUB complexes. Interacts (via MBD domain) with ASXL1, ASXL2 and ASXL3 (via PHD domain); the interaction is probably direct, mediates association with other PR-DUB complex core components.

Its subcellular location is the nucleus. It is found in the chromosome. Functionally, non-catalytic component of the polycomb repressive deubiquitinase (PR-DUB) complex, a complex that specifically mediates deubiquitination of histone H2A monoubiquitinated at 'Lys-120' (H2AK119ub1). Important for stability of PR-DUB components and stimulating its ubiquitinase activity. As part of the PR-DUB complex, associates with chromatin enriched in histone marks H3K4me1, H3K4me3, and H3K27Ac, but not in H3K27me3. MBD5 and MBD6 containing complexes associate with distinct chromatin regions enriched in genes involved in different pathways. Heterochromatin recruitment is not mediated by DNA methylation. The PR-DUB complex is an epigenetic regulator of gene expression, including genes involved in development, cell communication, signaling, cell proliferation and cell viability; may promote cancer cell growth. The protein is Methyl-CpG-binding domain protein 6 (MBD6) of Homo sapiens (Human).